Reading from the N-terminus, the 150-residue chain is Lymphotoxin-beta (150 aa).

Positions 1–149 (AWITGQGLGW…GKTFFGAVMV (149 aa)) constitute a THD domain. N-linked (GlcNAc...) asparagine glycosylation occurs at Asn128.

Belongs to the tumor necrosis factor family. As to quaternary structure, heterotrimer of either two LTB and one LTA subunits or (less prevalent) two LTA and one LTB subunits.

It localises to the membrane. Its function is as follows. Cytokine that binds to LTBR/TNFRSF3. May play a specific role in immune response regulation. Provides the membrane anchor for the attachment of the heterotrimeric complex to the cell surface. The sequence is that of Lymphotoxin-beta (LTB) from Sus scrofa (Pig).